The sequence spans 371 residues: Peptidyl-prolyl cis-trans isomerase CPR6 (371 aa).

The PPIase cyclophilin-type domain maps to 7 to 174 (FFDISIGGKP…RDVKIDDCGV (168 aa)). 3 TPR repeats span residues 219–252 (IETV…LKEY), 270–303 (VSIP…EAAD), and 308–341 (AKAL…QPND).

Belongs to the cyclophilin-type PPIase family. PPIase D subfamily. In terms of assembly, interacts with RPD3.

The protein localises to the cytoplasm. It carries out the reaction [protein]-peptidylproline (omega=180) = [protein]-peptidylproline (omega=0). PPIases accelerate the folding of proteins. It catalyzes the cis-trans isomerization of proline imidic peptide bonds in oligopeptides. The polypeptide is Peptidyl-prolyl cis-trans isomerase CPR6 (CPR6) (Saccharomyces cerevisiae (strain ATCC 204508 / S288c) (Baker's yeast)).